A 555-amino-acid polypeptide reads, in one-letter code: Protein PLASTID TRANSCRIPTIONALLY ACTIVE 12, chloroplastic (555 aa).

Residues 1–58 constitute a chloroplast transit peptide; the sequence is MASCYNPWRLFPGMSTAVPAGPVTAPAHSRTCKSSKVFSALPHRRGLLFLGTRRARIK. Disordered regions lie at residues 80 to 100, 115 to 167, and 468 to 541; these read YFDS…SIPG, ARAP…EPDV, and SYNE…IDDS. Residues 144–154 show a composition bias toward polar residues; it reads QVTSASGTEGA. Composition is skewed to acidic residues over residues 471-480 and 490-502; these read EDSDDEDEDV and LEDE…DVAE. Residues 508-519 show a composition bias toward polar residues; it reads NQNWSALKSTGQ. Residues 521–538 are compositionally biased toward basic and acidic residues; that stretch reads EKPKEKSKKDEMTLKEAI.

As to quaternary structure, component of the plastid-encoded plastid RNA polymerase (PEP) complex.

It is found in the plastid. Its subcellular location is the chloroplast stroma. It localises to the nucleus. Its function is as follows. Required for the activity of the plastid-encoded RNA polymerase (PEP) and full expression of genes transcribed by PEP. Required for the proper build-up and formation of the PEP-complex. Binds single-stranded (ss) DNA and RNA, but not double-stranded (ds) DNA. The sequence is that of Protein PLASTID TRANSCRIPTIONALLY ACTIVE 12, chloroplastic from Zea mays (Maize).